Here is a 164-residue protein sequence, read N- to C-terminus: Pheromone-binding protein 2 (164 aa).

Residues 1–22 (MIRKVLLSVLLAVLMTINLGQA) form the signal peptide. 3 disulfide bridges follow: Cys41–Cys76, Cys72–Cys130, and Cys119–Cys139.

The protein belongs to the PBP/GOBP family. As to expression, antenna.

Functionally, this major soluble protein in olfactory sensilla of male moths might serve to solubilize the extremely hydrophobic pheromone molecules and to transport pheromone through the aqueous lymph to receptors located on olfactory cilia. The protein is Pheromone-binding protein 2 of Antheraea pernyi (Chinese oak silk moth).